Reading from the N-terminus, the 80-residue chain is Large ribosomal subunit protein uL24 (80 aa).

This sequence belongs to the universal ribosomal protein uL24 family. As to quaternary structure, part of the 50S ribosomal subunit.

One of two assembly initiator proteins, it binds directly to the 5'-end of the 23S rRNA, where it nucleates assembly of the 50S subunit. In terms of biological role, one of the proteins that surrounds the polypeptide exit tunnel on the outside of the subunit. The polypeptide is Large ribosomal subunit protein uL24 (Prosthecochloris aestuarii (strain DSM 271 / SK 413)).